Reading from the N-terminus, the 443-residue chain is Inactive polypeptide N-acetylgalactosaminyltransferase-like protein 5 (443 aa).

The Cytoplasmic segment spans residues 1 to 4; sequence MRNA. A helical; Signal-anchor for type II membrane protein membrane pass occupies residues 5–27; that stretch reads IIRCLFYGSLTFGIWTALLFIYL. At 28–443 the chain is on the lumenal side; it reads HHNHVSNWQK…PELEASVNRS (416 aa). N-linked (GlcNAc...) asparagine glycosylation occurs at Asn-87. 2 disulfides stabilise this stretch: Cys-124–Cys-355 and Cys-346–Cys-422. The catalytic subdomain A stretch occupies residues 133-243; the sequence is LPTASIVICF…RVWLEPLLHA (111 aa). Positions 174 and 204 each coordinate substrate. Position 227 (Asp-227) interacts with Mn(2+). Position 228 (Ser-228) interacts with substrate. His-229 contacts Mn(2+). The tract at residues 301-363 is catalytic subdomain B; that stretch reads PIRSPAMSGG…PCSRVGHISK (63 aa). Position 332 (Trp-332) interacts with substrate. His-360 is a binding site for Mn(2+).

Belongs to the glycosyltransferase 2 family. GalNAc-T subfamily. Mn(2+) serves as cofactor. As to expression, expressed in testis.

The protein resides in the late endosome membrane. Its function is as follows. Probable inactive glycosyltransferase required during spermatid development. May participate in protein loading into the acrosomes and accumulation of ubiquitin-proteasome systems around the head-tail coupling apparatus region. This chain is Inactive polypeptide N-acetylgalactosaminyltransferase-like protein 5 (GALNTL5), found in Macaca fascicularis (Crab-eating macaque).